A 151-amino-acid chain; its full sequence is Ribosome maturation factor RimP (151 aa).

Belongs to the RimP family.

It localises to the cytoplasm. Its function is as follows. Required for maturation of 30S ribosomal subunits. The chain is Ribosome maturation factor RimP from Haemophilus influenzae (strain PittGG).